The sequence spans 349 residues: 2-oxoglutarate-Fe(II) type oxidoreductase ppzD (349 aa).

Residues 200 to 311 (NTSELRLNHY…RYSVAYFGKP (112 aa)) enclose the Fe2OG dioxygenase domain. Fe cation is bound by residues H227, D229, and H287. R302 lines the 2-oxoglutarate pocket.

Belongs to the iron/ascorbate-dependent oxidoreductase family. Fe(2+) is required as a cofactor.

The enzyme catalyses L-proline + 2-oxoglutarate + O2 = trans-4-hydroxy-L-proline + succinate + CO2. It carries out the reaction L-proline + 2-oxoglutarate + O2 = trans-3-hydroxy-L-proline + succinate + CO2. The catalysed reaction is D-proline + 2-oxoglutarate + O2 = cis-4-hydroxy-D-proline + succinate + CO2. It participates in secondary metabolite biosynthesis. In terms of biological role, 2-oxoglutarate-Fe(II) type oxidoreductase; part of the gene cluster that mediates the biosynthesis of pyrrolopyrazines, secondary metabolites showing insecticidal activity. Within the pathway, ppzD converts L-proline into trans-4-hydroxy-L-proline as a major product, yielding a key precursor for peramine biosynthesis. PpzD is also able to convert L-proline into trans-3-hydroxy-L-proline. The single multifunctional NRPS ppzA is sufficient to produce peramine via condensation of 1-pyrroline-5-carboxylate and arginine, N-methylation of the alpha-amino group of arginine and reduction of the thioester and the cyclization to form an iminium ion resulting in release from the peptide synthetase. Deprotonation of this intermediate and oxidation of the pyrroline ring would give rise to peramine. In Epichloe species that produce only peramine, the peramine synthetase gene is not localized in a gene cluster, in contrast to Metarhizium species that contain additional pyrrolopyrazine biosynthesis genes. The 2-oxoglutarate-Fe(II) type oxidoreductase ppzC hydroxylates peramine to yield the newly identified compound 8-hydroxyperamine whereas ppzD converts L-proline into trans-4-hydroxy-L-proline, a precursor of peramine biosynthesis. This Metarhizium majus (strain ARSEF 297) protein is 2-oxoglutarate-Fe(II) type oxidoreductase ppzD (ppzD).